A 185-amino-acid polypeptide reads, in one-letter code: Jasmonate-induced protein homolog (185 aa).

The protein belongs to the jasmonate-induced protein family.

This chain is Jasmonate-induced protein homolog, found in Atriplex canescens (Fourwing saltbush).